The sequence spans 236 residues: uncharacterized protein (236 aa).

Residues 3-116 (TCLIVDDELF…RLSKTLKRVR (114 aa)) form the Response regulatory domain. A 4-aspartylphosphate modification is found at Asp-54. Residues 135–235 (LPCYSGSKLK…LKSLKQLFGF (101 aa)) form the HTH LytTR-type domain.

This is an uncharacterized protein from Shewanella oneidensis (strain ATCC 700550 / JCM 31522 / CIP 106686 / LMG 19005 / NCIMB 14063 / MR-1).